The sequence spans 155 residues: SsrA-binding protein (155 aa).

The protein belongs to the SmpB family.

It localises to the cytoplasm. Required for rescue of stalled ribosomes mediated by trans-translation. Binds to transfer-messenger RNA (tmRNA), required for stable association of tmRNA with ribosomes. tmRNA and SmpB together mimic tRNA shape, replacing the anticodon stem-loop with SmpB. tmRNA is encoded by the ssrA gene; the 2 termini fold to resemble tRNA(Ala) and it encodes a 'tag peptide', a short internal open reading frame. During trans-translation Ala-aminoacylated tmRNA acts like a tRNA, entering the A-site of stalled ribosomes, displacing the stalled mRNA. The ribosome then switches to translate the ORF on the tmRNA; the nascent peptide is terminated with the 'tag peptide' encoded by the tmRNA and targeted for degradation. The ribosome is freed to recommence translation, which seems to be the essential function of trans-translation. This Geobacillus thermodenitrificans (strain NG80-2) protein is SsrA-binding protein.